The following is a 316-amino-acid chain: tRNA dimethylallyltransferase (316 aa).

13–20 contacts ATP; the sequence is GPTASGKT. Position 15-20 (15-20) interacts with substrate; that stretch reads TASGKT. Interaction with substrate tRNA stretches follow at residues 38 to 41, 162 to 166, 243 to 248, and 276 to 283; these read DSAL, QRINR, RCVGYR, and KRQITWLR.

Belongs to the IPP transferase family. In terms of assembly, monomer. Mg(2+) serves as cofactor.

The catalysed reaction is adenosine(37) in tRNA + dimethylallyl diphosphate = N(6)-dimethylallyladenosine(37) in tRNA + diphosphate. Catalyzes the transfer of a dimethylallyl group onto the adenine at position 37 in tRNAs that read codons beginning with uridine, leading to the formation of N6-(dimethylallyl)adenosine (i(6)A). The sequence is that of tRNA dimethylallyltransferase from Pasteurella multocida (strain Pm70).